The chain runs to 261 residues: UPF0246 protein Vapar_1301 (261 aa).

This sequence belongs to the UPF0246 family.

The chain is UPF0246 protein Vapar_1301 from Variovorax paradoxus (strain S110).